We begin with the raw amino-acid sequence, 261 residues long: Bidirectional sugar transporter SWEET1b (261 aa).

At M1–K6 the chain is on the extracellular side. A helical membrane pass occupies residues F7–T27. One can recognise a MtN3/slv 1 domain in the interval F7–H95. Topologically, residues F28–G42 are cytoplasmic. The helical transmembrane segment at V43–V63 threads the bilayer. The Extracellular segment spans residues S64–S71. Residues T72–A92 traverse the membrane as a helical segment. Residues S93 to T101 lie on the Cytoplasmic side of the membrane. A helical transmembrane segment spans residues L102–A122. Over L123–K129 the chain is Extracellular. The helical transmembrane segment at L130–I150 threads the bilayer. The 83-residue stretch at G133–K215 folds into the MtN3/slv 2 domain. Over M151–P164 the chain is Cytoplasmic. A helical transmembrane segment spans residues F165–G185. Residues R186–F189 are Extracellular-facing. The chain crosses the membrane as a helical span at residues V190 to I210. The Cytoplasmic portion of the chain corresponds to Y211–V261. The interval G218–V261 is disordered.

The protein belongs to the SWEET sugar transporter family. In terms of assembly, forms homodimers. Highly expressed in leaves. Expressed at very low levels in roots, stems and panicles.

It is found in the cell membrane. The enzyme catalyses D-glucose(out) = D-glucose(in). The catalysed reaction is D-galactose(in) = D-galactose(out). Functionally, mediates transport of sugars across the plasma membrane. Can transport glucose and galactose, but not fructose, mannose and sucrose. The chain is Bidirectional sugar transporter SWEET1b (SWEET1B) from Oryza sativa subsp. japonica (Rice).